Here is a 554-residue protein sequence, read N- to C-terminus: Arginine--tRNA ligase (554 aa).

The short motif at 129-139 (ANPTGPLHIGH) is the 'HIGH' region element.

It belongs to the class-I aminoacyl-tRNA synthetase family. In terms of assembly, monomer.

It localises to the cytoplasm. It catalyses the reaction tRNA(Arg) + L-arginine + ATP = L-arginyl-tRNA(Arg) + AMP + diphosphate. The chain is Arginine--tRNA ligase from Geobacter sp. (strain M21).